We begin with the raw amino-acid sequence, 137 residues long: Oleosin Ara h 11.0101 (137 aa).

Ala-2 bears the N-acetylalanine; alternate mark. A run of 2 helical transmembrane segments spans residues 27-47 (AVVAGGSLLILAGLVLAGTVI) and 55-75 (LFVIFSPVLVPAVITVALLGL).

Belongs to the oleosin family. As to expression, expressed in seeds (at protein level).

Its subcellular location is the lipid droplet. It localises to the membrane. Functionally, may have a structural role to stabilize the lipid body during desiccation of the seed by preventing coalescence of the oil. Probably interacts with both lipid and phospholipid moieties of lipid bodies. May also provide recognition signals for specific lipase anchorage in lipolysis during seedling growth. This Arachis hypogaea (Peanut) protein is Oleosin Ara h 11.0101.